Consider the following 201-residue polypeptide: Phosphoheptose isomerase 2 (201 aa).

One can recognise an SIS domain in the interval 39 to 198 (VIKAYKNGNK…EEELFGKGFS (160 aa)). 54–56 (NGG) is a substrate binding site. Zn(2+)-binding residues include His-63 and Glu-67. Substrate-binding positions include Glu-67, 96–97 (ND), 122–124 (STS), Ser-127, and Gln-174. Zn(2+)-binding residues include Gln-174 and His-182.

Belongs to the SIS family. GmhA subfamily. As to quaternary structure, homotetramer. Zn(2+) is required as a cofactor.

The protein localises to the cytoplasm. The enzyme catalyses 2 D-sedoheptulose 7-phosphate = D-glycero-alpha-D-manno-heptose 7-phosphate + D-glycero-beta-D-manno-heptose 7-phosphate. It functions in the pathway carbohydrate biosynthesis; D-glycero-D-manno-heptose 7-phosphate biosynthesis; D-glycero-alpha-D-manno-heptose 7-phosphate and D-glycero-beta-D-manno-heptose 7-phosphate from sedoheptulose 7-phosphate: step 1/1. The protein operates within capsule biogenesis; capsule polysaccharide biosynthesis. Its function is as follows. Catalyzes the isomerization of sedoheptulose 7-phosphate in D-glycero-D-manno-heptose 7-phosphate. No activity with L-galacto-heptulose, L-galacto-heptulose 7-phosphate or D-manno-heptulose. The polypeptide is Phosphoheptose isomerase 2 (Campylobacter jejuni subsp. jejuni serotype O:2 (strain ATCC 700819 / NCTC 11168)).